Consider the following 434-residue polypeptide: Beta-enolase (434 aa).

At S2 the chain carries N-acetylserine. Residues H158 and E167 each coordinate substrate. E210 serves as the catalytic Proton donor. Mg(2+) is bound by residues D245, E293, and D318. Substrate is bound by residues E293 and D318. K343 acts as the Proton acceptor in catalysis. Residues S370–S373 and K394 contribute to the substrate site.

Belongs to the enolase family. In terms of assembly, homodimer. Interacts with PNKD. Mg(2+) serves as cofactor.

It localises to the cytoplasm. It carries out the reaction (2R)-2-phosphoglycerate = phosphoenolpyruvate + H2O. It functions in the pathway carbohydrate degradation; glycolysis; pyruvate from D-glyceraldehyde 3-phosphate: step 4/5. Its function is as follows. Glycolytic enzyme that catalyzes the conversion of 2-phosphoglycerate to phosphoenolpyruvate. This is Beta-enolase (ENO3) from Gallus gallus (Chicken).